A 339-amino-acid chain; its full sequence is Ketol-acid reductoisomerase (NADP(+)) (339 aa).

In terms of domain architecture, KARI N-terminal Rossmann spans Met-1–Thr-182. NADP(+) contacts are provided by residues Tyr-24 to Gln-27, Arg-48, Ser-51, Ser-53, and Asp-83 to Gln-86. His-108 is a catalytic residue. NADP(+) is bound at residue Gly-134. The KARI C-terminal knotted domain occupies Asn-183–Ile-328. Mg(2+) contacts are provided by Asp-191, Glu-195, Glu-227, and Glu-231. Residue Ser-252 coordinates substrate.

It belongs to the ketol-acid reductoisomerase family. It depends on Mg(2+) as a cofactor.

It catalyses the reaction (2R)-2,3-dihydroxy-3-methylbutanoate + NADP(+) = (2S)-2-acetolactate + NADPH + H(+). The catalysed reaction is (2R,3R)-2,3-dihydroxy-3-methylpentanoate + NADP(+) = (S)-2-ethyl-2-hydroxy-3-oxobutanoate + NADPH + H(+). Its pathway is amino-acid biosynthesis; L-isoleucine biosynthesis; L-isoleucine from 2-oxobutanoate: step 2/4. It participates in amino-acid biosynthesis; L-valine biosynthesis; L-valine from pyruvate: step 2/4. Functionally, involved in the biosynthesis of branched-chain amino acids (BCAA). Catalyzes an alkyl-migration followed by a ketol-acid reduction of (S)-2-acetolactate (S2AL) to yield (R)-2,3-dihydroxy-isovalerate. In the isomerase reaction, S2AL is rearranged via a Mg-dependent methyl migration to produce 3-hydroxy-3-methyl-2-ketobutyrate (HMKB). In the reductase reaction, this 2-ketoacid undergoes a metal-dependent reduction by NADPH to yield (R)-2,3-dihydroxy-isovalerate. This Novosphingobium aromaticivorans (strain ATCC 700278 / DSM 12444 / CCUG 56034 / CIP 105152 / NBRC 16084 / F199) protein is Ketol-acid reductoisomerase (NADP(+)).